Reading from the N-terminus, the 291-residue chain is uncharacterized protein (291 aa).

Residues 1 to 82 (MEAEKETEQE…SYSSSPFETH (82 aa)) are disordered. Composition is skewed to low complexity over residues 28–43 (HSHS…ISAS) and 59–78 (STSS…SSSP).

This is an uncharacterized protein from Arabidopsis thaliana (Mouse-ear cress).